Consider the following 147-residue polypeptide: Nucleoside diphosphate kinase (147 aa).

ATP-binding residues include Lys-9, Phe-57, Arg-85, Thr-91, Arg-102, and Asn-112. Residue His-115 is the Pros-phosphohistidine intermediate of the active site.

The protein belongs to the NDK family. As to quaternary structure, homotetramer. Mg(2+) serves as cofactor.

Its subcellular location is the cytoplasm. It catalyses the reaction a 2'-deoxyribonucleoside 5'-diphosphate + ATP = a 2'-deoxyribonucleoside 5'-triphosphate + ADP. The enzyme catalyses a ribonucleoside 5'-diphosphate + ATP = a ribonucleoside 5'-triphosphate + ADP. Major role in the synthesis of nucleoside triphosphates other than ATP. The ATP gamma phosphate is transferred to the NDP beta phosphate via a ping-pong mechanism, using a phosphorylated active-site intermediate. This is Nucleoside diphosphate kinase from Fervidobacterium nodosum (strain ATCC 35602 / DSM 5306 / Rt17-B1).